Reading from the N-terminus, the 217-residue chain is Dihydroflavonol 4-reductase (217 aa).

Positions 27 and 146 each coordinate NADP(+).

The protein belongs to the NAD(P)-dependent epimerase/dehydratase family. Dihydroflavonol-4-reductase subfamily.

It catalyses the reaction a (2R,3S,4S)-leucoanthocyanidin + NADP(+) = a (2R,3R)-dihydroflavonol + NADPH + H(+). The enzyme catalyses (2S)-flavan-4-ol + NADP(+) = (2S)-flavanone + NADPH + H(+). The protein operates within pigment biosynthesis; anthocyanin biosynthesis. Functionally, bifunctional enzyme involved in flavonoid metabolism. This is Dihydroflavonol 4-reductase (DFR1) from Medicago sativa (Alfalfa).